A 549-amino-acid polypeptide reads, in one-letter code: Frizzled-7-A (549 aa).

A signal peptide spans 1–22 (MSSTVSLLFCCLFLQLCPSAQQ). Residues 23–231 (YHGEKGISVP…EEEVRFARLW (209 aa)) are Extracellular-facing. Residues 32 to 151 (PDHGFCQPIS…HGAGEICVGQ (120 aa)) enclose the FZ domain. Intrachain disulfides connect Cys37/Cys98, Cys45/Cys91, Cys82/Cys119, Cys108/Cys148, and Cys112/Cys136. N-linked (GlcNAc...) asparagine glycosylation occurs at Asn51. A glycan (N-linked (GlcNAc...) asparagine) is linked at Asn152. A helical transmembrane segment spans residues 232 to 252 (VGIWAILCCISTLFTVLTYLV). Topologically, residues 253-263 (DMRRFSYPERP) are cytoplasmic. Residues 264–284 (IIFLSGCYFMVAVAYTAGFLL) form a helical membrane-spanning segment. The Extracellular segment spans residues 285 to 311 (EERAVCVERFSEDSYRTVAQGTKKEGC). A helical transmembrane segment spans residues 312–332 (TILFMILYFFGMASSIWWVIL). Residues 333–354 (SLTWFLSAGMKWGHEAIEANSQ) are Cytoplasmic-facing. Residues 355-375 (YFHLAAWAVPAVKTITILAMG) traverse the membrane as a helical segment. The Extracellular portion of the chain corresponds to 376–398 (QVDGDVLSGVCYVGINSVDSLRG). A helical membrane pass occupies residues 399 to 419 (FVLAPLFVYLFIGTSFLLAGF). Residues 420-445 (VSLFRIRTIMKHDGTKTEKLEKLMVR) lie on the Cytoplasmic side of the membrane. Residues 446 to 466 (IGVFSVMYTVPATIVLACYFY) traverse the membrane as a helical segment. Residues 467-503 (EQAFRDTWEKTWLVQTCKGYAVPCPNYNFAPMSPDFT) lie on the Extracellular side of the membrane. A helical membrane pass occupies residues 504–524 (VFMIKYLMTMIVGITSSFWIW). Topologically, residues 525 to 549 (SGKTLQSWRRFYHRLSNGSKGETAV) are cytoplasmic. The Lys-Thr-X-X-X-Trp motif, mediates interaction with the PDZ domain of Dvl family members signature appears at 527 to 532 (KTLQSW). A PDZ-binding motif is present at residues 547 to 549 (TAV).

Belongs to the G-protein coupled receptor Fz/Smo family. As to quaternary structure, interacts with wnt11 and sdc4. The extracellular domain interacts with the extracellular domain of pcdh8/papc. Expressed in the animal region of cleavage stage embryos. During gastrulation, broadly expressed on the dorsal side of the embryo in deep mesodermal cells surrounding the blastopore lip and in presumptive anterior neuroectoderm. During neurulation, becomes progressively more restricted to the dorsal epidermis, neural plate, and neural tube. Expressed in the cranial neural crest of neurulae and tailbud embryos as well as the pronephros of tailbud embryos. Localized to the brain of neurulae, tailbud embryos and tadpoles. In tadpoles, strongly expressed in the eye and developing heart.

Its subcellular location is the cell membrane. It localises to the endosome membrane. Its function is as follows. Receptor for Wnt proteins. Acts in both canonical and non-canonical Wnt pathways. Although different papers report differing Wnt preferences, wnt5a, wnt8b and wnt11 have been proposed as synergists. In the canonical Wnt pathway, acts via beta-catenin to promote the expression of the dorsal genes siamois, twin and nodal3 and to establish the dorsal axis of the embryo and induce dorsal mesoderm formation. In a non-canonical Wnt/planar cell polarity (PCP) pathway, acts with sdc4 and dvl2/dsh to regulate convergent extension cell movements during gastrulation. Triggers phosphorylation of dvl2/dsh and its translocation to the plasma membrane. In a third branch of Wnt signaling, acts in a non-canonical pathway via trimeric G proteins, and independently of dvl2/dsh, to recruit protein kinase C (PKC) to the membrane and thus activate PKC. PKC signaling controls cell sorting and tissue separation during gastrulation. This chain is Frizzled-7-A (fzd7-a), found in Xenopus laevis (African clawed frog).